Here is a 444-residue protein sequence, read N- to C-terminus: Tubulin beta chain (444 aa).

The MREI motif signature appears at 1–4 (MREI). Q11 is a GTP binding site. At S40 the chain carries Phosphoserine. T55 is modified (phosphothreonine). An N6-acetyllysine; alternate modification is found at K58. K58 carries the N6-succinyllysine; alternate modification. K58 is covalently cross-linked (Glycyl lysine isopeptide (Lys-Gly) (interchain with G-Cter in ubiquitin); alternate). GTP is bound by residues E69, S138, G142, T143, and G144. E69 serves as a coordination point for Mg(2+). Position 172 is a phosphoserine; by CDK1 (S172). N204 and N226 together coordinate GTP. Phosphothreonine occurs at positions 285 and 290. An Omega-N-methylarginine modification is found at R318. K324 is covalently cross-linked (Glycyl lysine isopeptide (Lys-Gly) (interchain with G-Cter in ubiquitin)). The interval 423–444 (QQYQDATAEEEEDFGEEAEEEA) is disordered. Residues 429–444 (TAEEEEDFGEEAEEEA) are compositionally biased toward acidic residues. 4 positions are modified to 5-glutamyl polyglutamate: E434, E438, E439, and E441. A 5-glutamyl glycine mark is found at E438, E439, E441, E442, and E443.

The protein belongs to the tubulin family. As to quaternary structure, heterodimer of alpha and beta chains. A typical microtubule is a hollow water-filled tube with an outer diameter of 25 nm and an inner diameter of 15 nM. Alpha-beta heterodimers associate head-to-tail to form protofilaments running lengthwise along the microtubule wall with the beta-tubulin subunit facing the microtubule plus end conferring a structural polarity. Microtubules usually have 13 protofilaments but different protofilament numbers can be found in some organisms and specialized cells. Interacts with CIMAP3. Interacts with DIAPH1. Interacts with MX1. May interact with RNABP10. Interacts with CFAP157. Nascent tubulin polypeptide interacts (via beta-tubulin MREI motif) with TTC5/STRAP; this interaction results in tubulin mRNA-targeted degradation. Requires Mg(2+) as cofactor. In terms of processing, some glutamate residues at the C-terminus are polyglycylated, resulting in polyglycine chains on the gamma-carboxyl group. Glycylation is mainly limited to tubulin incorporated into axonemes (cilia and flagella) whereas glutamylation is prevalent in neuronal cells, centrioles, axonemes, and the mitotic spindle. Both modifications can coexist on the same protein on adjacent residues, and lowering polyglycylation levels increases polyglutamylation, and reciprocally. Cilia and flagella glycylation is required for their stability and maintenance. Flagella glycylation controls sperm motility. Some glutamate residues at the C-terminus are polyglutamylated, resulting in polyglutamate chains on the gamma-carboxyl group. Polyglutamylation plays a key role in microtubule severing by spastin (SPAST). SPAST preferentially recognizes and acts on microtubules decorated with short polyglutamate tails: severing activity by SPAST increases as the number of glutamates per tubulin rises from one to eight, but decreases beyond this glutamylation threshold. Glutamylation is also involved in cilia motility. Post-translationally, phosphorylated on Ser-172 by CDK1 during the cell cycle, from metaphase to telophase, but not in interphase. This phosphorylation inhibits tubulin incorporation into microtubules.

The protein localises to the cytoplasm. The protein resides in the cytoskeleton. Functionally, tubulin is the major constituent of microtubules, a cylinder consisting of laterally associated linear protofilaments composed of alpha- and beta-tubulin heterodimers. Microtubules grow by the addition of GTP-tubulin dimers to the microtubule end, where a stabilizing cap forms. Below the cap, tubulin dimers are in GDP-bound state, owing to GTPase activity of alpha-tubulin. The sequence is that of Tubulin beta chain (TUBB) from Sus scrofa (Pig).